A 235-amino-acid polypeptide reads, in one-letter code: Kinetochore protein Spc25 (235 aa).

Residues 44–106 adopt a coiled-coil conformation; it reads KNILSAKEAI…DMEAQLLRHT (63 aa). Residues 193 to 216 are disordered; sequence EVAGASPVTPSGSERPKATSKHSN.

Belongs to the SPC25 family. Component of the Ndc80 complex, which is composed of Ndc80, Nuf2 and Spc25.

It localises to the nucleus. The protein resides in the chromosome. It is found in the centromere. Its subcellular location is the kinetochore. Acts as a component of the essential kinetochore-associated Ndc80 complex, which is required for chromosome segregation and spindle checkpoint activity during meiosis and mitosis. Required for kinetochore integrity and the organization of stable microtubule binding sites in the outer plate of the kinetochore. Participates in SAC signaling that responds specifically to disruptions in spindle microtubule dynamics. The NDC80 complex synergistically enhances the affinity of the SKA1 complex for microtubules and may allow the NDC80 complex to track depolymerizing microtubules. The sequence is that of Kinetochore protein Spc25 from Drosophila pseudoobscura pseudoobscura (Fruit fly).